The sequence spans 733 residues: ATP-dependent RNA helicase DBP7 (733 aa).

2 disordered regions span residues 1–92 (MDED…SKMI) and 119–139 (SSQLKVTKESDEKTYLPSNAP). A compositionally biased stretch (polar residues) spans 17 to 30 (SVSSGSNKRTTSKV). Basic and acidic residues predominate over residues 52 to 80 (QKKDRSATGKDDGKKHENDESNDSKKRPT). The Q motif signature appears at 144–173 (STFEGLGINERLSKHLTETLRFKNPTKVQK). The region spanning 177–372 (PTMLSTERDL…SIILNNPEMI (196 aa)) is the Helicase ATP-binding domain. 190 to 197 (AQTGSGKT) lines the ATP pocket. Positions 304–307 (DEGD) match the DEAD box motif. The Helicase C-terminal domain maps to 406–596 (TLSAILKKIS…NYENYLKDGF (191 aa)). The disordered stretch occupies residues 687–714 (KKLGKSVESNSGIQGASKKTKKEDPRKK).

It belongs to the DEAD box helicase family. DDX31/DBP7 subfamily.

The protein resides in the nucleus. It localises to the nucleolus. It carries out the reaction ATP + H2O = ADP + phosphate + H(+). Its function is as follows. ATP-binding RNA helicase involved in the biogenesis of 60S ribosomal subunits and is required for the normal formation of 25S and 5.8S rRNAs. This Scheffersomyces stipitis (strain ATCC 58785 / CBS 6054 / NBRC 10063 / NRRL Y-11545) (Yeast) protein is ATP-dependent RNA helicase DBP7 (DPB7).